A 608-amino-acid polypeptide reads, in one-letter code: Phosphogluconate dehydratase (608 aa).

[4Fe-4S] cluster-binding residues include cysteine 154 and cysteine 221.

It belongs to the IlvD/Edd family. Requires [4Fe-4S] cluster as cofactor.

It catalyses the reaction 6-phospho-D-gluconate = 2-dehydro-3-deoxy-6-phospho-D-gluconate + H2O. The protein operates within carbohydrate metabolism; Entner-Doudoroff pathway. Its function is as follows. Catalyzes the dehydration of 6-phospho-D-gluconate to 2-dehydro-3-deoxy-6-phospho-D-gluconate. The polypeptide is Phosphogluconate dehydratase (Pseudomonas aeruginosa (strain ATCC 15692 / DSM 22644 / CIP 104116 / JCM 14847 / LMG 12228 / 1C / PRS 101 / PAO1)).